Here is a 114-residue protein sequence, read N- to C-terminus: Ribosome-binding factor A (114 aa).

It belongs to the RbfA family. As to quaternary structure, monomer. Binds 30S ribosomal subunits, but not 50S ribosomal subunits or 70S ribosomes.

The protein localises to the cytoplasm. In terms of biological role, one of several proteins that assist in the late maturation steps of the functional core of the 30S ribosomal subunit. Associates with free 30S ribosomal subunits (but not with 30S subunits that are part of 70S ribosomes or polysomes). Required for efficient processing of 16S rRNA. May interact with the 5'-terminal helix region of 16S rRNA. The polypeptide is Ribosome-binding factor A (Listeria monocytogenes serotype 4b (strain F2365)).